The following is a 250-amino-acid chain: ATP synthase subunit a (250 aa).

The next 5 membrane-spanning stretches (helical) occupy residues 27–47 (TDTV…AFYL), 86–106 (FVLP…WLAV), 129–149 (INYV…AGIW), 191–211 (IFAG…IMWA), and 219–239 (FDLF…ILYF).

The protein belongs to the ATPase A chain family. In terms of assembly, F-type ATPases have 2 components, CF(1) - the catalytic core - and CF(0) - the membrane proton channel. CF(1) has five subunits: alpha(3), beta(3), gamma(1), delta(1), epsilon(1). CF(0) has three main subunits: a(1), b(2) and c(9-12). The alpha and beta chains form an alternating ring which encloses part of the gamma chain. CF(1) is attached to CF(0) by a central stalk formed by the gamma and epsilon chains, while a peripheral stalk is formed by the delta and b chains.

The protein localises to the cell membrane. In terms of biological role, key component of the proton channel; it plays a direct role in the translocation of protons across the membrane. The protein is ATP synthase subunit a of Mycobacterium bovis (strain ATCC BAA-935 / AF2122/97).